Consider the following 175-residue polypeptide: DM domain-containing protein mab-23 (175 aa).

The DM DNA-binding region spans C8–H56. A disordered region spans residues N58–G93. The segment covering E59–S71 has biased composition (polar residues). Residues T81 to T91 show a composition bias toward low complexity.

As to expression, expressed in a limited number of non-sex-specific tissues in males, including 6-8 unidentified neurons of the head, ventral body wall muscle, and the PHCL/R neurons.

Its subcellular location is the nucleus. Functionally, probable transcription factor that plays a role in the development of the dopaminergic neurons of the male-specific genital sensilla (simple sense organs) known as rays, by negatively regulating the activity of the transcription factor ast-1. Involved in male mating behavior, probably as a result of a role in the differentiation of male-specific diagonal muscles. Required for development of the male proctodeum. May be dispensable in hermaphrodites. The protein is DM domain-containing protein mab-23 of Caenorhabditis elegans.